Consider the following 400-residue polypeptide: MTKKSIVNLSPADVAGKRVLVRVDFNVPLDGATITDDTRIRAALPTIKDLIEKGAKVILCSHFGRPKGQVVESMRLTPVATRLSELLGQPVVMCDDCIGDSVTAAINQLQNGQVALLENLRFHAEEEANDPEFAQKLAANADLYVNDAFGTAHRAHASTEGVTHYLSPNVAGYLIEKELNYLQAAIENPQRPLVAIIGGSKVSSKIGVIETLLEKCDKLIIGGGMIFTFYKARGLNVGKSLVEDDKLELAKSLEAKAKEKGVDFLLPTDVVLADNFAPDANAKTVSIDAIEDGWMGLDIGPESVKVFQAALADCKSVIWNGPMGVFEFDKFAKGTEAIAHTLAELTGKGTITIIGGGDSVAAVEKVGVADKMSHISTGGGASLELLEGKVLPGIAALDEV.

Substrate is bound by residues 24-26 (DFN), arginine 39, 62-65 (HFGR), arginine 121, and arginine 154. Residues lysine 205, glycine 296, glutamate 327, and 356-359 (GGDS) contribute to the ATP site.

This sequence belongs to the phosphoglycerate kinase family. As to quaternary structure, monomer.

It localises to the cytoplasm. It catalyses the reaction (2R)-3-phosphoglycerate + ATP = (2R)-3-phospho-glyceroyl phosphate + ADP. It functions in the pathway carbohydrate degradation; glycolysis; pyruvate from D-glyceraldehyde 3-phosphate: step 2/5. This chain is Phosphoglycerate kinase, found in Rippkaea orientalis (strain PCC 8801 / RF-1) (Cyanothece sp. (strain PCC 8801)).